Reading from the N-terminus, the 145-residue chain is MGKRKKSTRKPTKRLVQKLDTKFNCLFCNHEKSVSCTLDKKNSIGTLSCKICGQSFQTRINSLSQPVDVYSDWFDAVEEVNSGRGSDTDDGDEGSDSDYESDSEQDAKTQNDGEIDSDEEEVDSDEERIGQVKRGRGALVDSDDE.

4 residues coordinate Zn(2+): cysteine 25, cysteine 28, cysteine 49, and cysteine 52. Serine 55 carries the phosphoserine modification. The interval 80–145 (VNSGRGSDTD…RGALVDSDDE (66 aa)) is disordered. Acidic residues-rich tracts occupy residues 88–104 (TDDGDEGSDSDYESDSE) and 113–126 (GEIDSDEEEVDSDE). Phosphoserine occurs at positions 117, 124, and 142.

The protein belongs to the ELOF1 family.

It is found in the nucleus. In terms of biological role, transcription elongation factor implicated in the maintenance of proper chromatin structure in actively transcribed regions. The protein is Transcription elongation factor 1 (ELF1) of Saccharomyces cerevisiae (strain ATCC 204508 / S288c) (Baker's yeast).